The following is a 375-amino-acid chain: Actin, cytoplasmic (375 aa).

This sequence belongs to the actin family.

The protein resides in the cytoplasm. It localises to the cytoskeleton. The enzyme catalyses ATP + H2O = ADP + phosphate + H(+). In terms of biological role, actins are highly conserved proteins that are involved in various types of cell motility and are ubiquitously expressed in all eukaryotic cells. This Sterkiella nova (Ciliate) protein is Actin, cytoplasmic (MIC-ACT-1).